The following is a 791-amino-acid chain: Pleckstrin homology domain-containing family H member 3 (791 aa).

Positions 1 to 18 are cleaved as a signal peptide; it reads MPLPGGLWWLLCCRRGFT. Acidic residues predominate over residues 29 to 41; the sequence is LSGDGDEDEDDET. Residues 29–71 are disordered; the sequence is LSGDGDEDEDDETFELRSPSPAGGGRGSLDVTLTQPTRNGPIT. S30 bears the Phosphoserine mark. Positions 59 to 71 are enriched in polar residues; it reads VTLTQPTRNGPIT. The PH domain occupies 95 to 199; sequence DVIVKGWLYR…WGVALREVIA (105 aa). Residues 237–399 enclose the MyTH4 domain; sequence HTSSALYAPL…PSLAEISALS (163 aa). Positions 404–755 constitute an FERM domain; sequence LLCTVHCPGA…ANPSPERPCS (352 aa). Over residues 549-559 the composition is skewed to low complexity; it reads PRGPLPLLDRL. Disordered regions lie at residues 549–580 and 593–623; these read PRGPLPLLDRLMPPPAPPREQPSRPARRPPPS and LAKRRAERARRIGTGRSTESTAQVGGGGGGS. The span at 594-605 shows a compositional bias: basic residues; the sequence is AKRRAERARRIG. At R636 the chain carries Omega-N-methylarginine. A disordered region spans residues 748-791; that stretch reads PSPERPCSSSGPPSQDLSDTSPPSQHQVLEKPQGQSGCLRQLQD. The segment covering 754–791 has biased composition (polar residues); it reads CSSSGPPSQDLSDTSPPSQHQVLEKPQGQSGCLRQLQD.

This Rattus norvegicus (Rat) protein is Pleckstrin homology domain-containing family H member 3 (Plekhh3).